Reading from the N-terminus, the 123-residue chain is MIKKLDRNKARRKRQLRVRKTVHGTPERPRLNVFRSNQNIYAQIIDDTVGRTLVSASTLDPEVRSRLQGSGGNKAAAAIVGEVVAKRALAAGVTKVVFDRAGYLYHGRVAALAEAAREAGLEF.

The protein belongs to the universal ribosomal protein uL18 family. In terms of assembly, part of the 50S ribosomal subunit; part of the 5S rRNA/L5/L18/L25 subcomplex. Contacts the 5S and 23S rRNAs.

This is one of the proteins that bind and probably mediate the attachment of the 5S RNA into the large ribosomal subunit, where it forms part of the central protuberance. This Symbiobacterium thermophilum (strain DSM 24528 / JCM 14929 / IAM 14863 / T) protein is Large ribosomal subunit protein uL18.